The sequence spans 178 residues: ATP-dependent protease subunit HslV (178 aa).

The active site involves Thr-7. Na(+) is bound by residues Gly-162, Cys-165, and Thr-168.

This sequence belongs to the peptidase T1B family. HslV subfamily. A double ring-shaped homohexamer of HslV is capped on each side by a ring-shaped HslU homohexamer. The assembly of the HslU/HslV complex is dependent on binding of ATP.

Its subcellular location is the cytoplasm. It catalyses the reaction ATP-dependent cleavage of peptide bonds with broad specificity.. Its activity is regulated as follows. Allosterically activated by HslU binding. Its function is as follows. Protease subunit of a proteasome-like degradation complex believed to be a general protein degrading machinery. The polypeptide is ATP-dependent protease subunit HslV (Burkholderia mallei (strain ATCC 23344)).